Reading from the N-terminus, the 459-residue chain is GTPase Der (459 aa).

EngA-type G domains lie at 4–169 and 179–355; these read PLVA…PEVT and IAVS…AAHR. GTP is bound by residues 10–17, 57–61, 120–123, 185–192, 232–236, and 297–300; these read GRPNVGKS, DTGGL, NKCE, DTAGI, and NKWD. One can recognise a KH-like domain in the interval 356 to 441; it reads KRVPTAVVNE…PIRFLWRGKS (86 aa).

It belongs to the TRAFAC class TrmE-Era-EngA-EngB-Septin-like GTPase superfamily. EngA (Der) GTPase family. In terms of assembly, associates with the 50S ribosomal subunit.

GTPase that plays an essential role in the late steps of ribosome biogenesis. This is GTPase Der from Synechococcus sp. (strain JA-2-3B'a(2-13)) (Cyanobacteria bacterium Yellowstone B-Prime).